Reading from the N-terminus, the 609-residue chain is Autophagy-related protein 22-1 (609 aa).

4 helical membrane passes run 95–115 (YYAG…GVEI), 117–137 (TASF…ILII), 151–171 (LLLV…LGVV), and 176–196 (MVGA…FVLL). The interval 214 to 238 (AREPPPALDGSRAQEGHSDTTNDID) is disordered. A compositionally biased stretch (basic and acidic residues) spans 225 to 238 (RAQEGHSDTTNDID). An N-linked (GlcNAc...) asparagine glycan is attached at Asn244. A helical membrane pass occupies residues 287 to 307 (IGIGYIGAIILQIVCILVVIA). An N-linked (GlcNAc...) asparagine glycan is attached at Asn309. 3 consecutive transmembrane segments (helical) span residues 317–337 (LVLF…ALWL), 381–401 (ILLF…VSGT), and 415–435 (AALG…AFSW). N-linked (GlcNAc...) asparagine glycosylation occurs at Asn443. A run of 4 helical transmembrane segments spans residues 450-470 (IIAC…GFIP), 487-509 (FPLG…SFFG), 522-542 (ALYA…VGII), and 552-572 (AFVF…LVDV).

Belongs to the ATG22 family.

It is found in the vacuole membrane. Functionally, vacuolar effluxer which mediate the efflux of amino acids resulting from autophagic degradation. The release of autophagic amino acids allows the maintenance of protein synthesis and viability during nitrogen starvation. This chain is Autophagy-related protein 22-1 (atg22-1), found in Neosartorya fischeri (strain ATCC 1020 / DSM 3700 / CBS 544.65 / FGSC A1164 / JCM 1740 / NRRL 181 / WB 181) (Aspergillus fischerianus).